A 328-amino-acid polypeptide reads, in one-letter code: Phosphoserine phosphatase (328 aa).

Asp-113 functions as the Nucleophile in the catalytic mechanism. 2 residues coordinate Mg(2+): Asp-113 and Asp-115. Catalysis depends on Asp-115, which acts as the Proton donor. Residues Glu-122, Arg-158, 201–202 (SG), and Lys-246 each bind substrate. Asp-269 contributes to the Mg(2+) binding site. Asn-272 contributes to the substrate binding site.

Belongs to the HAD-like hydrolase superfamily. SerB family. Mg(2+) serves as cofactor.

It catalyses the reaction O-phospho-L-serine + H2O = L-serine + phosphate. The catalysed reaction is O-phospho-D-serine + H2O = D-serine + phosphate. The protein operates within amino-acid biosynthesis; L-serine biosynthesis; L-serine from 3-phospho-D-glycerate: step 3/3. This Vibrio cholerae serotype O1 (strain ATCC 39315 / El Tor Inaba N16961) protein is Phosphoserine phosphatase.